The chain runs to 405 residues: Glucose-1-phosphate adenylyltransferase 1 (405 aa).

Alpha-D-glucose 1-phosphate contacts are provided by residues tyrosine 96, glycine 161, 176–177, and serine 194; that span reads EK.

Belongs to the bacterial/plant glucose-1-phosphate adenylyltransferase family. As to quaternary structure, homotetramer.

It carries out the reaction alpha-D-glucose 1-phosphate + ATP + H(+) = ADP-alpha-D-glucose + diphosphate. It functions in the pathway glycan biosynthesis; glycogen biosynthesis. Functionally, involved in the biosynthesis of ADP-glucose, a building block required for the elongation reactions to produce glycogen. Catalyzes the reaction between ATP and alpha-D-glucose 1-phosphate (G1P) to produce pyrophosphate and ADP-Glc. This chain is Glucose-1-phosphate adenylyltransferase 1, found in Vibrio vulnificus (strain CMCP6).